The sequence spans 115 residues: Biotrophy-associated secreted protein 1 (115 aa).

The N-terminal stretch at M1–A22 is a signal peptide. Residues D24 to P115 are disordered. Basic and acidic residues-rich tracts occupy residues I46 to G55 and Q91 to P115.

It localises to the secreted. It is found in the host cytoplasm. Its function is as follows. Secreted effector involved in biotrophic colonization of plant cells. Induces an early, basal defense response in susceptible rice, including rapid callose deposition and ROS production in leaves and calli. Also promotes sporulation and mycelia growth suggesting a role across the whole process of interaction, from the biotrophic phase to sporulation. The chain is Biotrophy-associated secreted protein 1 from Pyricularia oryzae (strain 70-15 / ATCC MYA-4617 / FGSC 8958) (Rice blast fungus).